Here is a 478-residue protein sequence, read N- to C-terminus: Sulfate adenylyltransferase subunit 1 (478 aa).

One can recognise a tr-type G domain in the interval 28–244; it reads KTMLRFLTCG…LESVDVVNAR (217 aa). The tract at residues 37 to 44 is G1; that stretch reads GSVDDGKS. Residue 37 to 44 participates in GTP binding; the sequence is GSVDDGKS. The G2 stretch occupies residues 95–99; sequence GITID. The segment at 116-119 is G3; sequence DTPG. Residues 116 to 120 and 171 to 174 each bind GTP; these read DTPGH and NKMD. Residues 171–174 are G4; that stretch reads NKMD. Positions 209–211 are G5; it reads SAL.

This sequence belongs to the TRAFAC class translation factor GTPase superfamily. Classic translation factor GTPase family. CysN/NodQ subfamily. As to quaternary structure, heterodimer composed of CysD, the smaller subunit, and CysN.

It catalyses the reaction sulfate + ATP + H(+) = adenosine 5'-phosphosulfate + diphosphate. Its pathway is sulfur metabolism; hydrogen sulfide biosynthesis; sulfite from sulfate: step 1/3. With CysD forms the ATP sulfurylase (ATPS) that catalyzes the adenylation of sulfate producing adenosine 5'-phosphosulfate (APS) and diphosphate, the first enzymatic step in sulfur assimilation pathway. APS synthesis involves the formation of a high-energy phosphoric-sulfuric acid anhydride bond driven by GTP hydrolysis by CysN coupled to ATP hydrolysis by CysD. This Yersinia pseudotuberculosis serotype O:1b (strain IP 31758) protein is Sulfate adenylyltransferase subunit 1.